The chain runs to 200 residues: NAD(P)H dehydrogenase (quinone) (200 aa).

One can recognise a Flavodoxin-like domain in the interval 4-191 (VLVLYYSSYG…DIARYQGKHV (188 aa)). FMN contacts are provided by residues 10–15 (SSYGHV) and 79–81 (TRF). An NAD(+)-binding site is contributed by Y12. W99 provides a ligand contact to substrate. FMN contacts are provided by residues 114–120 (STGTQHG) and H135.

It belongs to the WrbA family. It depends on FMN as a cofactor.

It catalyses the reaction a quinone + NADH + H(+) = a quinol + NAD(+). The catalysed reaction is a quinone + NADPH + H(+) = a quinol + NADP(+). The sequence is that of NAD(P)H dehydrogenase (quinone) from Burkholderia orbicola (strain MC0-3).